A 116-amino-acid chain; its full sequence is Large ribosomal subunit protein uL18 (116 aa).

It belongs to the universal ribosomal protein uL18 family. In terms of assembly, part of the 50S ribosomal subunit; part of the 5S rRNA/L5/L18/L25 subcomplex. Contacts the 5S and 23S rRNAs.

Its function is as follows. This is one of the proteins that bind and probably mediate the attachment of the 5S RNA into the large ribosomal subunit, where it forms part of the central protuberance. This is Large ribosomal subunit protein uL18 from Pseudoalteromonas translucida (strain TAC 125).